Reading from the N-terminus, the 376-residue chain is UDP-N-acetylglucosamine--N-acetylmuramyl-(pentapeptide) pyrophosphoryl-undecaprenol N-acetylglucosamine transferase (376 aa).

UDP-N-acetyl-alpha-D-glucosamine is bound by residues 11–13 (TGG), asparagine 117, arginine 160, serine 208, and glutamine 310.

The protein belongs to the glycosyltransferase 28 family. MurG subfamily.

It is found in the cell inner membrane. It catalyses the reaction di-trans,octa-cis-undecaprenyl diphospho-N-acetyl-alpha-D-muramoyl-L-alanyl-D-glutamyl-meso-2,6-diaminopimeloyl-D-alanyl-D-alanine + UDP-N-acetyl-alpha-D-glucosamine = di-trans,octa-cis-undecaprenyl diphospho-[N-acetyl-alpha-D-glucosaminyl-(1-&gt;4)]-N-acetyl-alpha-D-muramoyl-L-alanyl-D-glutamyl-meso-2,6-diaminopimeloyl-D-alanyl-D-alanine + UDP + H(+). It participates in cell wall biogenesis; peptidoglycan biosynthesis. Its function is as follows. Cell wall formation. Catalyzes the transfer of a GlcNAc subunit on undecaprenyl-pyrophosphoryl-MurNAc-pentapeptide (lipid intermediate I) to form undecaprenyl-pyrophosphoryl-MurNAc-(pentapeptide)GlcNAc (lipid intermediate II). The chain is UDP-N-acetylglucosamine--N-acetylmuramyl-(pentapeptide) pyrophosphoryl-undecaprenol N-acetylglucosamine transferase from Rickettsia massiliae (strain Mtu5).